Consider the following 218-residue polypeptide: Capsid protein (218 aa).

Methionine 1 is modified (N-acetylmethionine; by host). Residues 1–30 (MDKSGSPNASRTSRRRRPRRGSRSASGADA) form a disordered region. The segment covering 12–22 (TSRRRRPRRGS) has biased composition (basic residues).

The protein belongs to the cucumovirus capsid protein family.

The protein localises to the virion. In terms of biological role, capsid protein. Probably binds RNA and plays a role in packaging. This chain is Capsid protein, found in Cucumis sativus (Cucumber).